Consider the following 147-residue polypeptide: D-aminoacyl-tRNA deacylase (147 aa).

The Gly-cisPro motif, important for rejection of L-amino acids motif lies at 137 to 138; it reads GP.

This sequence belongs to the DTD family. As to quaternary structure, homodimer.

It localises to the cytoplasm. The enzyme catalyses glycyl-tRNA(Ala) + H2O = tRNA(Ala) + glycine + H(+). The catalysed reaction is a D-aminoacyl-tRNA + H2O = a tRNA + a D-alpha-amino acid + H(+). Functionally, an aminoacyl-tRNA editing enzyme that deacylates mischarged D-aminoacyl-tRNAs. Also deacylates mischarged glycyl-tRNA(Ala), protecting cells against glycine mischarging by AlaRS. Acts via tRNA-based rather than protein-based catalysis; rejects L-amino acids rather than detecting D-amino acids in the active site. By recycling D-aminoacyl-tRNA to D-amino acids and free tRNA molecules, this enzyme counteracts the toxicity associated with the formation of D-aminoacyl-tRNA entities in vivo and helps enforce protein L-homochirality. The sequence is that of D-aminoacyl-tRNA deacylase from Bacillus pumilus (strain SAFR-032).